We begin with the raw amino-acid sequence, 462 residues long: Centrosomal protein of 55 kDa (462 aa).

Over residues 1–11 (MSSRSPKDLIK) the composition is skewed to basic and acidic residues. The segment at 1 to 25 (MSSRSPKDLIKSKWGSRPSSSKSDT) is disordered. Residues 12–23 (SKWGSRPSSSKS) show a composition bias toward low complexity. Coiled coils occupy residues 50–185 (KVAN…QQWL) and 228–400 (YLQE…KQLH). Phosphoserine occurs at positions 96 and 99. An interaction with TSG101 region spans residues 157-235 (ANCFNSSMNS…EGYLQEEKQK (79 aa)). The segment at 160–214 (FNSSMNSIHEKEMQLKDALEKNQQWLVYDQQREAYVKGLLAKIFELEKRTETAAA) is interaction with PDCD6IP. The segment at 354–462 (QMQACTLDFE…LLVHVEYCMK (109 aa)) is required for localization to the interphase centrosome and to the midbody during cytokinesis. Residues S423 and S426 each carry the phosphoserine modification. T428 carries the phosphothreonine modification. Phosphoserine; by PLK1 is present on S434.

As to quaternary structure, homodimer. Interacts (phosphorylated on Ser-423 and Ser-426) with PLK1; the interaction is indirect via the MTMR3:MTMR4 heterooligomer, occurs during early mitosis, regulates the phosphorylation of CEP55 by PLK1 and its recruitment to the midbody where it can mediate cell abscission. Interacts with AKAP9/CG-NAP; the interaction occurs in interphase and is lost upon mitotic entry. Interacts with PCNT/Kendrin; the interaction occurs in interphase and is lost upon mitotic entry. Directly interacts with PDCD6IP; this interaction is required for PDCD6IP targeting to the midbody; CEP55 binds PDCD6IP in a 2:1 stoichiometry; PDCD6IP competes with TSG101 for the same binding site. Interacts with TSG101; TSG101 competes with PDCD6IP for the same binding site; interaction is required for cytokinesis. Interacts with MVB12A, VPS37B, VPS37C and VPS28. There is a hierachy of phosphorylation, where both Ser-423 and Ser-426 are phosphorylated at the onset of mitosis, prior to Ser-434. Phosphorylation at Ser-423 and Ser-426 is required for dissociation from the centrosome at the G2/M boundary. Phosphorylation at the 3 sites, Ser-423, Ser-426 and Ser-434, is required for protein function at the final stages of cell division to complete cytokinesis successfully.

Its subcellular location is the cytoplasm. The protein resides in the cytoskeleton. It localises to the microtubule organizing center. It is found in the centrosome. The protein localises to the centriole. Its subcellular location is the cleavage furrow. The protein resides in the midbody. It localises to the midbody ring. In terms of biological role, plays a role in mitotic exit and cytokinesis. Recruits PDCD6IP and TSG101 to midbody during cytokinesis. Required for successful completion of cytokinesis. Not required for microtubule nucleation. Plays a role in the development of the brain and kidney. The chain is Centrosomal protein of 55 kDa from Rattus norvegicus (Rat).